We begin with the raw amino-acid sequence, 209 residues long: Large ribosomal subunit protein uL3 (209 aa).

Residues 128 to 152 (QARGPMSHGSRYHRRPGSMGPVDPN) form a disordered region.

It belongs to the universal ribosomal protein uL3 family. Part of the 50S ribosomal subunit. Forms a cluster with proteins L14 and L19.

Its function is as follows. One of the primary rRNA binding proteins, it binds directly near the 3'-end of the 23S rRNA, where it nucleates assembly of the 50S subunit. The protein is Large ribosomal subunit protein uL3 of Halalkalibacterium halodurans (strain ATCC BAA-125 / DSM 18197 / FERM 7344 / JCM 9153 / C-125) (Bacillus halodurans).